The following is a 159-amino-acid chain: Transcription antitermination protein NusB (159 aa).

Residues 1 to 20 form a disordered region; the sequence is MNKNTQGKPSGKPVRRDGVD.

Belongs to the NusB family.

Its function is as follows. Involved in transcription antitermination. Required for transcription of ribosomal RNA (rRNA) genes. Binds specifically to the boxA antiterminator sequence of the ribosomal RNA (rrn) operons. The polypeptide is Transcription antitermination protein NusB (Stenotrophomonas maltophilia (strain R551-3)).